Here is a 155-residue protein sequence, read N- to C-terminus: Ribosomal RNA large subunit methyltransferase H (155 aa).

S-adenosyl-L-methionine-binding positions include I71, G103, and F122–W127.

Belongs to the RNA methyltransferase RlmH family. In terms of assembly, homodimer.

The protein resides in the cytoplasm. It catalyses the reaction pseudouridine(1915) in 23S rRNA + S-adenosyl-L-methionine = N(3)-methylpseudouridine(1915) in 23S rRNA + S-adenosyl-L-homocysteine + H(+). Specifically methylates the pseudouridine at position 1915 (m3Psi1915) in 23S rRNA. The sequence is that of Ribosomal RNA large subunit methyltransferase H from Cereibacter sphaeroides (strain ATCC 17025 / ATH 2.4.3) (Rhodobacter sphaeroides).